The sequence spans 415 residues: Phosphoribosylamine--glycine ligase (415 aa).

Positions 108–311 (KKIMEKYNIP…LMQHIIDLDE (204 aa)) constitute an ATP-grasp domain. 134–191 (IENCELPVVVKKDGLAAGKGVIIADTIEAARSAIEIMYGDEEEGTVVFETFLEGEEFS) contacts ATP. Mg(2+) contacts are provided by E281 and N283.

It belongs to the GARS family. Mg(2+) is required as a cofactor. It depends on Mn(2+) as a cofactor.

It carries out the reaction 5-phospho-beta-D-ribosylamine + glycine + ATP = N(1)-(5-phospho-beta-D-ribosyl)glycinamide + ADP + phosphate + H(+). It participates in purine metabolism; IMP biosynthesis via de novo pathway; N(1)-(5-phospho-D-ribosyl)glycinamide from 5-phospho-alpha-D-ribose 1-diphosphate: step 2/2. This is Phosphoribosylamine--glycine ligase from Staphylococcus aureus (strain COL).